Here is a 335-residue protein sequence, read N- to C-terminus: Acetyl-coenzyme A carboxylase carboxyl transferase subunit alpha (335 aa).

In terms of domain architecture, CoA carboxyltransferase C-terminal spans 40-294 (QLETLATRRR…KEAIEKHLDT (255 aa)).

It belongs to the AccA family. In terms of assembly, acetyl-CoA carboxylase is a heterohexamer composed of biotin carboxyl carrier protein (AccB), biotin carboxylase (AccC) and two subunits each of ACCase subunit alpha (AccA) and ACCase subunit beta (AccD).

The protein resides in the cytoplasm. The catalysed reaction is N(6)-carboxybiotinyl-L-lysyl-[protein] + acetyl-CoA = N(6)-biotinyl-L-lysyl-[protein] + malonyl-CoA. Its pathway is lipid metabolism; malonyl-CoA biosynthesis; malonyl-CoA from acetyl-CoA: step 1/1. Component of the acetyl coenzyme A carboxylase (ACC) complex. First, biotin carboxylase catalyzes the carboxylation of biotin on its carrier protein (BCCP) and then the CO(2) group is transferred by the carboxyltransferase to acetyl-CoA to form malonyl-CoA. The sequence is that of Acetyl-coenzyme A carboxylase carboxyl transferase subunit alpha from Prochlorococcus marinus (strain MIT 9312).